A 230-amino-acid polypeptide reads, in one-letter code: Bidirectional sugar transporter SWEET16 (230 aa).

Residues 1–3 lie on the Extracellular side of the membrane; that stretch reads MAD. The helical transmembrane segment at 4–24 threads the bilayer; it reads LSFYVGVIGNVISVLVFLSPV. Residues 6 to 92 form the MtN3/slv 1 domain; sequence FYVGVIGNVI…LIFLFFVPKS (87 aa). The Cytoplasmic segment spans residues 25–40; that stretch reads ETFWRIVQRRSTEEYE. A helical transmembrane segment spans residues 41-61; that stretch reads CFPYICTLMSSSLWTYYGIVT. At 62-69 the chain is on the extracellular side; it reads PGEYLVST. The chain crosses the membrane as a helical span at residues 70–90; it reads VNGFGALAESIYVLIFLFFVP. Over 91–93 the chain is Cytoplasmic; that stretch reads KSR. The chain crosses the membrane as a helical span at residues 94–114; it reads FLKTVVVVLALNVCFPVIAIA. Topologically, residues 115–128 are extracellular; the sequence is GTRTLFGDANSRSS. The chain crosses the membrane as a helical span at residues 129–149; the sequence is SMGFICATLNIIMYGSPLSAI. Residues 129–212 form the MtN3/slv 2 domain; it reads SMGFICATLN…LLIYAYYRNA (84 aa). Over 150-162 the chain is Cytoplasmic; it reads KTVVTTRSVQFMP. A helical membrane pass occupies residues 163–183; it reads FWLSFFLFLNGAIWGVYALLL. The Extracellular segment spans residues 184 to 185; sequence HD. The helical transmembrane segment at 186–206 threads the bilayer; it reads MFLLVPNGMGFFLGIMQLLIY. At 207–230 the chain is on the cytoplasmic side; that stretch reads AYYRNAEPIVEDEEGLIPNQPLLA.

Belongs to the SWEET sugar transporter family. Forms homooligomers and heterooligomers with SWEET1, SWEET7, SWEET8, SWEET9 and SWEET17. Mostly expressed in the cortex of mature roots, and, to a lower extent, in aerial organs such as leaves, stems, and flowers. Mainly present in vascular parenchyma cells, especially in the petiole vasculature, flower stalks and at the base of individual, not fully developed flowers.

It localises to the vacuole membrane. Mediates both low-affinity uptake and efflux of sugar across the vacuolar membrane. Regulates sugars homeostasis in leaves and roots by exporting/importing them through the tonoplast regarding metabolic demand. Acts as a vacuolar hexose transporter, such as glucose (Glc), fructose (Fru), and sucrose (Suc). The chain is Bidirectional sugar transporter SWEET16 from Arabidopsis thaliana (Mouse-ear cress).